Consider the following 235-residue polypeptide: MVLTNPAEIRNPAAPPEITQGLSENVILTTLDDLYNWARLSSLWPLMYGTACCFIEFAALIGSRFDFDRFGLVPRCSPRQADLLITAGTVTMKMAPALVRLYEQMPEPKYVIAMGACTITGGMFSADSTTTVRGVDKLLPVDVYIPGCPPRPEAIIDAIVKLRKKVANDSIQERGKLLQTNRYYSTTHQMKPTAPLLTGEYLRSAARQAGPLPAAAGAAVAPQLPVTEKEGRDRA.

4 residues coordinate [4Fe-4S] cluster: C52, C53, C117, and C148. The segment covering 216–226 (AGAAVAPQLPV) has biased composition (low complexity). The tract at residues 216-235 (AGAAVAPQLPVTEKEGRDRA) is disordered.

This sequence belongs to the complex I 20 kDa subunit family. In terms of assembly, NDH-1 can be composed of about 15 different subunits; different subcomplexes with different compositions have been identified which probably have different functions. The cofactor is [4Fe-4S] cluster.

The protein resides in the cellular thylakoid membrane. The enzyme catalyses a plastoquinone + NADH + (n+1) H(+)(in) = a plastoquinol + NAD(+) + n H(+)(out). It catalyses the reaction a plastoquinone + NADPH + (n+1) H(+)(in) = a plastoquinol + NADP(+) + n H(+)(out). NDH-1 shuttles electrons from an unknown electron donor, via FMN and iron-sulfur (Fe-S) centers, to quinones in the respiratory and/or the photosynthetic chain. The immediate electron acceptor for the enzyme in this species is believed to be plastoquinone. Couples the redox reaction to proton translocation, and thus conserves the redox energy in a proton gradient. Cyanobacterial NDH-1 also plays a role in inorganic carbon-concentration. This chain is NAD(P)H-quinone oxidoreductase subunit K, found in Synechococcus elongatus (strain ATCC 33912 / PCC 7942 / FACHB-805) (Anacystis nidulans R2).